The primary structure comprises 83 residues: Urotensin-2 (83 aa).

A propeptide spanning residues 49 to 71 is cleaved from the precursor; the sequence is EVLLEKQSLLNPFSRVFGIRKQF. Cys77 and Cys82 are oxidised to a cystine.

It belongs to the urotensin-2 family.

It localises to the secreted. In terms of biological role, urotensin is found in the teleost caudal neurosecretory system. It has a suggested role in osmoregulation and as a corticotropin-releasing factor. The non-hormonal portion of this precursor may be a urotensin binding protein, urophysin. The protein is Urotensin-2 of Platichthys flesus (European flounder).